A 334-amino-acid polypeptide reads, in one-letter code: N-acetyl-gamma-glutamyl-phosphate reductase (334 aa).

Residue C154 is part of the active site.

It belongs to the NAGSA dehydrogenase family. Type 1 subfamily.

Its subcellular location is the cytoplasm. The catalysed reaction is N-acetyl-L-glutamate 5-semialdehyde + phosphate + NADP(+) = N-acetyl-L-glutamyl 5-phosphate + NADPH + H(+). The protein operates within amino-acid biosynthesis; L-arginine biosynthesis; N(2)-acetyl-L-ornithine from L-glutamate: step 3/4. Functionally, catalyzes the NADPH-dependent reduction of N-acetyl-5-glutamyl phosphate to yield N-acetyl-L-glutamate 5-semialdehyde. The sequence is that of N-acetyl-gamma-glutamyl-phosphate reductase from Buchnera aphidicola subsp. Acyrthosiphon pisum (strain Tuc7).